The sequence spans 356 residues: tRNA N6-adenosine threonylcarbamoyltransferase (356 aa).

Fe cation is bound by residues His131 and His135. Substrate is bound by residues Leu154–Gly158, Asp187, Gly200, and Asn289. Position 317 (Asp317) interacts with Fe cation.

It belongs to the KAE1 / TsaD family. It depends on Fe(2+) as a cofactor.

The protein localises to the cytoplasm. The catalysed reaction is L-threonylcarbamoyladenylate + adenosine(37) in tRNA = N(6)-L-threonylcarbamoyladenosine(37) in tRNA + AMP + H(+). In terms of biological role, required for the formation of a threonylcarbamoyl group on adenosine at position 37 (t(6)A37) in tRNAs that read codons beginning with adenine. Is involved in the transfer of the threonylcarbamoyl moiety of threonylcarbamoyl-AMP (TC-AMP) to the N6 group of A37, together with TsaE and TsaB. TsaD likely plays a direct catalytic role in this reaction. This chain is tRNA N6-adenosine threonylcarbamoyltransferase, found in Ruthia magnifica subsp. Calyptogena magnifica.